The chain runs to 331 residues: MNAHVRPVDPANVDPAQPRHDWTLEEVEALFELPFTELVFRAAEVHRRWFDPTELQLSQLLSVKTGGCPEDCGYCAQSQKFKTGLAASKLMEAETVIAAAAEAKAGGAQRFCMGAAWRDLKDRDLPKVAAMISGVKALGLETCATLGMLTADQAKALKAAGLDYYNHNLDTGPDYYDKVVTTRTYQDRLDTLAAVRDAGMATCCGGIVGMGETRRDRAGLLHQLATLPAHPDSLPINDLMPIPGTPLGDSKAVDPLEFVRMIAVARIVCPKSMVRIAAGREHMTKELQALCFLAGANSIFVGARLLTTDNPEKTADEALLADLKMKPMAMA.

The 219-residue stretch at 53–271 (TELQLSQLLS…IAVARIVCPK (219 aa)) folds into the Radical SAM core domain. Residues C68, C72, and C75 each coordinate [4Fe-4S] cluster. [2Fe-2S] cluster contacts are provided by C112, C143, C203, and R275.

Belongs to the radical SAM superfamily. Biotin synthase family. Homodimer. Requires [4Fe-4S] cluster as cofactor. [2Fe-2S] cluster serves as cofactor.

It catalyses the reaction (4R,5S)-dethiobiotin + (sulfur carrier)-SH + 2 reduced [2Fe-2S]-[ferredoxin] + 2 S-adenosyl-L-methionine = (sulfur carrier)-H + biotin + 2 5'-deoxyadenosine + 2 L-methionine + 2 oxidized [2Fe-2S]-[ferredoxin]. Its pathway is cofactor biosynthesis; biotin biosynthesis; biotin from 7,8-diaminononanoate: step 2/2. In terms of biological role, catalyzes the conversion of dethiobiotin (DTB) to biotin by the insertion of a sulfur atom into dethiobiotin via a radical-based mechanism. The protein is Biotin synthase of Phenylobacterium zucineum (strain HLK1).